The chain runs to 132 residues: Small ribosomal subunit protein uS13 (132 aa).

Residues 101–125 (RGLPVRGQRTKTNARTRKGPRKTVA) are compositionally biased toward basic residues. Positions 101 to 132 (RGLPVRGQRTKTNARTRKGPRKTVANKKIETR) are disordered.

The protein belongs to the universal ribosomal protein uS13 family. As to quaternary structure, part of the 30S ribosomal subunit. Forms a loose heterodimer with protein S19. Forms two bridges to the 50S subunit in the 70S ribosome.

Functionally, located at the top of the head of the 30S subunit, it contacts several helices of the 16S rRNA. In the 70S ribosome it contacts the 23S rRNA (bridge B1a) and protein L5 of the 50S subunit (bridge B1b), connecting the 2 subunits; these bridges are implicated in subunit movement. Contacts the tRNAs in the A and P-sites. The polypeptide is Small ribosomal subunit protein uS13 (Ureaplasma parvum serovar 3 (strain ATCC 27815 / 27 / NCTC 11736)).